Reading from the N-terminus, the 447-residue chain is MITIKKGLDLPIAGKPAQVIHSGNAVNQVAILGEEYVGMRPSMKVREGDVVKKGQVLFEDKKNPGVIFTAPASGTITAINRGEKRVLQSVVINVEGDEKITFAKYSTEQLNTLSSEQVKQNLIESGLWTALRTRPFSKVPSIESEASSIFVNAMDTNPLAADPSVVLKEYSQDFTNGLTVLSRLFPSKPLHLCKAGDSNIPTADLENLQIHDFTGVHPAGLVGTHIHFIDPVGIQKTVWHINYQDVIAVGKLFTTGELYSERVISLAGPQVKEPRLVRTTIGANLSQLTQNELSAGKNRVISGSVLCGQIAKDSHDYLGRYALQVSVIAEGNEKEFFGWIMPQANKYSVTRTVLGHFSKKLFNFTTSENGGERAMVPIGSYERVMPLDILPTLLLRDLIVGDTDGAQELGCLELDEEDLALCSFVCPGKYEYGSILRQVLDKIEKEG.

Belongs to the NqrA family. In terms of assembly, composed of six subunits; NqrA, NqrB, NqrC, NqrD, NqrE and NqrF.

It catalyses the reaction a ubiquinone + n Na(+)(in) + NADH + H(+) = a ubiquinol + n Na(+)(out) + NAD(+). In terms of biological role, NQR complex catalyzes the reduction of ubiquinone-1 to ubiquinol by two successive reactions, coupled with the transport of Na(+) ions from the cytoplasm to the periplasm. NqrA to NqrE are probably involved in the second step, the conversion of ubisemiquinone to ubiquinol. The sequence is that of Na(+)-translocating NADH-quinone reductase subunit A from Haemophilus influenzae (strain ATCC 51907 / DSM 11121 / KW20 / Rd).